Here is a 208-residue protein sequence, read N- to C-terminus: MKLVEVKHPLVKHKLGLMRAADVSTKHFRELATEVGSLLTYEATADLETEIVTIEGWCGPVEVQRIKGKKVTVVPILRAGLGMMDGVLEHIPSARISVVGMYRDEETLEPVPYFQKLASDIEERLAIVVDPMLATGGSMIATIDLLKQKGCKHIKVLVLVAAPEGIKALESAHPDIELYTASIDDHLNQDGYIIPGLGDAGDKIFGTK.

Residues R78, R103, and D130–S138 each bind 5-phospho-alpha-D-ribose 1-diphosphate. Residues I193 and G198–A200 contribute to the uracil site. D199 contributes to the 5-phospho-alpha-D-ribose 1-diphosphate binding site.

It belongs to the UPRTase family. Mg(2+) is required as a cofactor.

The enzyme catalyses UMP + diphosphate = 5-phospho-alpha-D-ribose 1-diphosphate + uracil. It participates in pyrimidine metabolism; UMP biosynthesis via salvage pathway; UMP from uracil: step 1/1. Allosterically activated by GTP. Functionally, catalyzes the conversion of uracil and 5-phospho-alpha-D-ribose 1-diphosphate (PRPP) to UMP and diphosphate. This Mannheimia succiniciproducens (strain KCTC 0769BP / MBEL55E) protein is Uracil phosphoribosyltransferase.